Here is a 243-residue protein sequence, read N- to C-terminus: Peptide deformylase, mitochondrial (243 aa).

Residues 1-39 (MARLWGALSLWPLWAAVPWGGAAAVGVRACSSTAAPDGV) constitute a mitochondrion transit peptide. Glycine 71, proline 169, and glycine 171 together coordinate substrate. The tract at residues 165–175 (LVTFPEGCESV) is hydrophobic dimerization interface. Residues cysteine 172 and histidine 214 each coordinate Co(2+). Glutamate 215 is an active-site residue. Histidine 218 contributes to the Co(2+) binding site.

It belongs to the polypeptide deformylase family. In terms of assembly, homodimer. Co(2+) is required as a cofactor. As to expression, ubiquitous.

It localises to the mitochondrion. The catalysed reaction is N-terminal N-formyl-L-methionyl-[peptide] + H2O = N-terminal L-methionyl-[peptide] + formate. Its function is as follows. Removes the formyl group from the N-terminal Met of newly synthesized proteins. This Homo sapiens (Human) protein is Peptide deformylase, mitochondrial.